The sequence spans 521 residues: Zinc finger CCCH domain-containing protein 45 (521 aa).

Disordered regions lie at residues Thr28 to Gly60, Thr142 to Ser185, and Ser296 to Pro319. Polar residues predominate over residues Asn34–Ser43. Over residues Glu159–Ser168 the composition is skewed to low complexity. Over residues Val170–Ser185 the composition is skewed to polar residues. The segment at Asn469–Tyr497 adopts a C3H1-type zinc-finger fold.

In Arabidopsis thaliana (Mouse-ear cress), this protein is Zinc finger CCCH domain-containing protein 45.